The chain runs to 561 residues: DNA ligase B (561 aa).

Lysine 125 acts as the N6-AMP-lysine intermediate in catalysis.

Belongs to the NAD-dependent DNA ligase family. LigB subfamily.

The catalysed reaction is NAD(+) + (deoxyribonucleotide)n-3'-hydroxyl + 5'-phospho-(deoxyribonucleotide)m = (deoxyribonucleotide)n+m + AMP + beta-nicotinamide D-nucleotide.. Catalyzes the formation of phosphodiester linkages between 5'-phosphoryl and 3'-hydroxyl groups in double-stranded DNA using NAD as a coenzyme and as the energy source for the reaction. In Escherichia coli O127:H6 (strain E2348/69 / EPEC), this protein is DNA ligase B.